Reading from the N-terminus, the 570-residue chain is Sorting nexin-41 (570 aa).

2 disordered regions span residues 1–31 and 81–115; these read MSDF…PSAS and FDDG…TTAS. The span at 84–101 shows a compositional bias: polar residues; sequence GSNSFSATPTASITNQND. The 139-residue stretch at 98 to 236 folds into the PX domain; that stretch reads NQNDTAHEAT…RFLDPHASWS (139 aa). Residues arginine 153, serine 155, lysine 179, and arginine 202 each coordinate a 1,2-diacyl-sn-glycero-3-phospho-(1D-myo-inositol-3-phosphate). The tract at residues 429-498 is disordered; it reads DSQRINDALG…ASRRQGIGKT (70 aa). The segment covering 440–454 has biased composition (polar residues); sequence TRSNNGPSTTNSGEQ. The segment covering 455–464 has biased composition (low complexity); sequence PSASPAPKKS.

The protein belongs to the sorting nexin family.

It localises to the endosome membrane. The protein resides in the endomembrane system. Its function is as follows. May be required for cytoplasm to vacuole transport (Cvt) and pexophagy. The polypeptide is Sorting nexin-41 (SNX41) (Yarrowia lipolytica (strain CLIB 122 / E 150) (Yeast)).